We begin with the raw amino-acid sequence, 406 residues long: UPF0754 membrane protein CYB_2931 (406 aa).

The next 2 helical transmembrane spans lie at 1-21 (MAFWIYVVPPLAGLVIGYFTN) and 385-405 (IVNLGGLLGFLVGCVQVLFLL).

The protein belongs to the UPF0754 family.

It is found in the cell inner membrane. The sequence is that of UPF0754 membrane protein CYB_2931 from Synechococcus sp. (strain JA-2-3B'a(2-13)) (Cyanobacteria bacterium Yellowstone B-Prime).